The following is a 331-amino-acid chain: Phosphoribosylformylglycinamidine cyclo-ligase (331 aa).

The protein belongs to the AIR synthase family.

The protein resides in the cytoplasm. The catalysed reaction is 2-formamido-N(1)-(5-O-phospho-beta-D-ribosyl)acetamidine + ATP = 5-amino-1-(5-phospho-beta-D-ribosyl)imidazole + ADP + phosphate + H(+). Its pathway is purine metabolism; IMP biosynthesis via de novo pathway; 5-amino-1-(5-phospho-D-ribosyl)imidazole from N(2)-formyl-N(1)-(5-phospho-D-ribosyl)glycinamide: step 2/2. The chain is Phosphoribosylformylglycinamidine cyclo-ligase from Clostridium botulinum (strain Loch Maree / Type A3).